A 383-amino-acid polypeptide reads, in one-letter code: MTKDTTSPPDQAGGTVAMAVLNAIQNPVVMVDESGFIAFANWEAEAFFGAAFASGALPDLDIHSFGSPLLALVDQVRTQGSPVNEYRVDLSSPRLGQDKLVDLYVAPVLSEPGGVVIVFQERSMADKIDRQLTHRAAARSVTGLASSLAHEIKNPLSGNRGAAQLLEQSVIDDDRALTRLICDETDRIVSLVDRMEVFSDERPVRRMPVNIHSVLDHVKRLAQSGFARNIRITESYDPSLPAVYANRDQLVQVFLNLVKNAAEAVGDRPDGEIMLTTAYRPGIRLSVAGTREKISLPLEFCVHDNGPGVPADLLPHLFDPFITTKTNGSGLGLALVAKIIGDHGGIIECDSQNSRTTFRVLMPASKDASLEDASSASSTGPSR.

The region spanning Ser-147–Lys-366 is the Histidine kinase domain. His-150 carries the phosphohistidine; by autocatalysis modification.

In terms of processing, autophosphorylated.

It is found in the cytoplasm. The catalysed reaction is ATP + protein L-histidine = ADP + protein N-phospho-L-histidine.. In terms of biological role, member of the two-component regulatory system NtrB/NtrC, which controls expression of the nitrogen-regulated (ntr) genes in response to nitrogen limitation. Under conditions of nitrogen limitation, NtrB autophosphorylates and transfers the phosphoryl group to NtrC. In the presence of nitrogen, acts as a phosphatase that dephosphorylates and inactivates NtrC. The protein is Sensory histidine kinase/phosphatase NtrB (ntrB) of Rhizobium leguminosarum bv. phaseoli.